Consider the following 964-residue polypeptide: Integrator complex subunit 7 (964 aa).

Residues 937 to 958 (QQLRHQLQQQQQNVPQPAAQRN) show a composition bias toward low complexity. The segment at 937–964 (QQLRHQLQQQQQNVPQPAAQRNISTRFQ) is disordered.

Belongs to the Integrator subunit 7 family. In terms of assembly, component of the Integrator complex, composed of core subunits INTS1, INTS2, INTS3, INTS4, INTS5, INTS6, INTS7, INTS8, INTS9/RC74, INTS10, INTS11/CPSF3L, INTS12, INTS13, INTS14 and INTS15. The core complex associates with protein phosphatase 2A subunits PPP2CA and PPP2R1A, to form the Integrator-PP2A (INTAC) complex.

It is found in the nucleus. The protein resides in the chromosome. The protein localises to the cytoplasm. In terms of biological role, component of the integrator complex, a multiprotein complex that terminates RNA polymerase II (Pol II) transcription in the promoter-proximal region of genes. The integrator complex provides a quality checkpoint during transcription elongation by driving premature transcription termination of transcripts that are unfavorably configured for transcriptional elongation: the complex terminates transcription by (1) catalyzing dephosphorylation of the C-terminal domain (CTD) of Pol II subunit POLR2A/RPB1 and SUPT5H/SPT5, (2) degrading the exiting nascent RNA transcript via endonuclease activity and (3) promoting the release of Pol II from bound DNA. The integrator complex is also involved in terminating the synthesis of non-coding Pol II transcripts, such as enhancer RNAs (eRNAs), small nuclear RNAs (snRNAs), telomerase RNAs and long non-coding RNAs (lncRNAs). Essential during embryogenesis for eye development. In Danio rerio (Zebrafish), this protein is Integrator complex subunit 7 (ints7).